The primary structure comprises 28 residues: Aspartate aminotransferase, mitochondrial (28 aa).

This sequence belongs to the class-I pyridoxal-phosphate-dependent aminotransferase family. Homodimer. It depends on pyridoxal 5'-phosphate as a cofactor.

The protein localises to the mitochondrion matrix. The enzyme catalyses L-aspartate + 2-oxoglutarate = oxaloacetate + L-glutamate. Plays a key role in amino acid metabolism. Important for metabolite exchange between mitochondria and cytosol. This chain is Aspartate aminotransferase, mitochondrial, found in Catharanthus roseus (Madagascar periwinkle).